Here is a 152-residue protein sequence, read N- to C-terminus: Toxin coregulated pilus biosynthesis protein S (152 aa).

The signal sequence occupies residues 1 to 20 (MNIKLSFISIAFLSLSFNVA).

It is found in the periplasm. It localises to the secreted. In terms of biological role, the toxin coregulated pilus (TCP) is essential for successful colonization of the small intestine. The protein is Toxin coregulated pilus biosynthesis protein S (tcpS) of Vibrio cholerae serotype O1 (strain ATCC 39315 / El Tor Inaba N16961).